We begin with the raw amino-acid sequence, 1895 residues long: Diacylglycerol kinase eta (1895 aa).

The segment covering 1–10 has biased composition (basic and acidic residues); the sequence is MAHLKLDTLH. Positions 1–37 are disordered; it reads MAHLKLDTLHVQRSPRGSRRSSPSSGRSSACSSGSIS. Low complexity predominate over residues 20-37; that stretch reads RSSPSSGRSSACSSGSIS. The 94-residue stretch at 82–175 folds into the PH domain; it reads AIIKEGFLLK…WLGSLKTATA (94 aa). Phorbol-ester/DAG-type zinc fingers lie at residues 195 to 245 and 267 to 318; these read HHHW…IANC and PHQW…AVAC. In terms of domain architecture, DAGKc spans 349–485; it reads GNFSPLLVFV…DRWSIMVFEK (137 aa). Disordered stretches follow at residues 781–801, 1012–1053, 1113–1137, and 1172–1191; these read ANID…ENTP, TTLC…MARL, QHRG…GANL, and PNTI…HGQD. Residues 1113–1128 are compositionally biased toward basic and acidic residues; it reads QHRGGDNDSDYPEHEQ. Positions 1172-1184 are enriched in polar residues; that stretch reads PNTILTTSTSPTK. Residues 1832–1895 enclose the SAM domain; that stretch reads WSVNEVVTWL…LQAIKDLSEN (64 aa).

The protein belongs to the eukaryotic diacylglycerol kinase family.

The protein localises to the cytoplasm. The enzyme catalyses a 1,2-diacyl-sn-glycerol + ATP = a 1,2-diacyl-sn-glycero-3-phosphate + ADP + H(+). Phosphorylates diacylglycerol (DAG) to generate phosphatidic acid (PA). The protein is Diacylglycerol kinase eta of Drosophila melanogaster (Fruit fly).